The following is a 318-amino-acid chain: Porphobilinogen deaminase (318 aa).

Residue cysteine 241 is modified to S-(dipyrrolylmethanemethyl)cysteine.

The protein belongs to the HMBS family. Monomer. Dipyrromethane is required as a cofactor.

The enzyme catalyses 4 porphobilinogen + H2O = hydroxymethylbilane + 4 NH4(+). Its pathway is porphyrin-containing compound metabolism; protoporphyrin-IX biosynthesis; coproporphyrinogen-III from 5-aminolevulinate: step 2/4. Functionally, tetrapolymerization of the monopyrrole PBG into the hydroxymethylbilane pre-uroporphyrinogen in several discrete steps. In Geobacter metallireducens (strain ATCC 53774 / DSM 7210 / GS-15), this protein is Porphobilinogen deaminase.